The primary structure comprises 96 residues: Guanine nucleotide-binding protein alpha-9 subunit (96 aa).

In terms of domain architecture, G-alpha spans 2 to 96 (YFHSTAIILF…ISASLKMVGV (95 aa)). Positions 9-16 (ILFLNKID) are G1 motif. Residues 13-16 (NKID) and Ala-69 contribute to the GTP site. A G2 motif region spans residues 67-72 (TSATDT).

This sequence belongs to the G-alpha family. G proteins are composed of 3 units; alpha, beta and gamma. The alpha chain contains the guanine nucleotide binding site. Expressed in ASJ neurons.

In terms of biological role, guanine nucleotide-binding proteins (G proteins) are involved as modulators or transducers in various transmembrane signaling systems. Plays a role in innate immunity and maintaining survival in response to metabolites of E.coli. This might be by regulating the expression and signaling of genes such as lys-8, ins-7 and daf-28. Has a role in lifespan to promote longevity. The sequence is that of Guanine nucleotide-binding protein alpha-9 subunit from Caenorhabditis elegans.